Consider the following 443-residue polypeptide: MSEMTPREIVSELDKHIIGQNNAKRSVAIALRNRWRRMQLNEELRHEVTPKNILMIGPTGVGKTEIARRLAKLANAPFIKVEATKFTEVGYVGKEVDSIIRDLTDAAVKMVRVQAIEKNRYRAEELAEERILDVLIPPAKNNWGQTEQQQEPSAARQAFRKKLREGQLDDKEIEIDLAAAPMGVEIMAPPGMEEMTSQLQSMFQNLGGQKQKARKLKIKDAMKLLIEEEAAKLVNPEELKQDAIDAVEQHGIVFIDEIDKICKRGESSGPDVSREGVQRDLLPLVEGCTVSTKHGMVKTDHILFIASGAFQIAKPSDLIPELQGRLPIRVELQALTTSDFERILTEPNASITVQYKALMATEGVNIEFTDSGIKRIAEAAWQVNESTENIGARRLHTVLERLMEEISYDASDLSGQNITIDADYVSKHLDALVADEDLSRFIL.

ATP is bound by residues Ile18, 60–65 (GVGKTE), Asp256, Glu321, and Arg393.

The protein belongs to the ClpX chaperone family. HslU subfamily. In terms of assembly, a double ring-shaped homohexamer of HslV is capped on each side by a ring-shaped HslU homohexamer. The assembly of the HslU/HslV complex is dependent on binding of ATP.

The protein localises to the cytoplasm. Its function is as follows. ATPase subunit of a proteasome-like degradation complex; this subunit has chaperone activity. The binding of ATP and its subsequent hydrolysis by HslU are essential for unfolding of protein substrates subsequently hydrolyzed by HslV. HslU recognizes the N-terminal part of its protein substrates and unfolds these before they are guided to HslV for hydrolysis. This is ATP-dependent protease ATPase subunit HslU from Escherichia coli O157:H7 (strain EC4115 / EHEC).